The following is a 266-amino-acid chain: Inositol-1-monophosphatase (266 aa).

Mg(2+) contacts are provided by E69, D86, L88, and D89. E69 contacts substrate. Residues 88 to 91, R185, and D214 each bind substrate; that span reads LDGT. D214 contributes to the Mg(2+) binding site.

This sequence belongs to the inositol monophosphatase superfamily. Mg(2+) is required as a cofactor.

The enzyme catalyses a myo-inositol phosphate + H2O = myo-inositol + phosphate. The polypeptide is Inositol-1-monophosphatase (suhB) (Mesorhizobium japonicum (strain LMG 29417 / CECT 9101 / MAFF 303099) (Mesorhizobium loti (strain MAFF 303099))).